The primary structure comprises 190 residues: Lysozyme g (190 aa).

The span at 1–10 (MPYGKIEDIK) shows a compositional bias: basic and acidic residues. The segment at 1-31 (MPYGKIEDIKTSGASDVTAAQDGLKEGGWKS) is disordered. Catalysis depends on residues E71 and D84.

It belongs to the glycosyl hydrolase 23 family.

It carries out the reaction Hydrolysis of (1-&gt;4)-beta-linkages between N-acetylmuramic acid and N-acetyl-D-glucosamine residues in a peptidoglycan and between N-acetyl-D-glucosamine residues in chitodextrins.. This chain is Lysozyme g, found in Takifugu rubripes (Japanese pufferfish).